A 429-amino-acid chain; its full sequence is Serine--tRNA ligase (429 aa).

Position 236 to 238 (236 to 238) interacts with L-serine; sequence TAE. Position 267-269 (267-269) interacts with ATP; sequence RRE. Glu-290 contacts L-serine. 354–357 contacts ATP; the sequence is EISS. Ser-390 provides a ligand contact to L-serine.

Belongs to the class-II aminoacyl-tRNA synthetase family. Type-1 seryl-tRNA synthetase subfamily. As to quaternary structure, homodimer. The tRNA molecule binds across the dimer.

It is found in the cytoplasm. The catalysed reaction is tRNA(Ser) + L-serine + ATP = L-seryl-tRNA(Ser) + AMP + diphosphate + H(+). It carries out the reaction tRNA(Sec) + L-serine + ATP = L-seryl-tRNA(Sec) + AMP + diphosphate + H(+). The protein operates within aminoacyl-tRNA biosynthesis; selenocysteinyl-tRNA(Sec) biosynthesis; L-seryl-tRNA(Sec) from L-serine and tRNA(Sec): step 1/1. Its function is as follows. Catalyzes the attachment of serine to tRNA(Ser). Is also able to aminoacylate tRNA(Sec) with serine, to form the misacylated tRNA L-seryl-tRNA(Sec), which will be further converted into selenocysteinyl-tRNA(Sec). This Gloeobacter violaceus (strain ATCC 29082 / PCC 7421) protein is Serine--tRNA ligase.